The primary structure comprises 827 residues: Valine--tRNA ligase (827 aa).

The short motif at proline 41–histidine 51 is the 'HIGH' region element. Positions lysine 511–serine 515 match the 'KMSKS' region motif. Position 514 (lysine 514) interacts with ATP. Positions glutamate 765–glutamate 827 form a coiled coil.

This sequence belongs to the class-I aminoacyl-tRNA synthetase family. ValS type 1 subfamily. Monomer.

Its subcellular location is the cytoplasm. It carries out the reaction tRNA(Val) + L-valine + ATP = L-valyl-tRNA(Val) + AMP + diphosphate. In terms of biological role, catalyzes the attachment of valine to tRNA(Val). As ValRS can inadvertently accommodate and process structurally similar amino acids such as threonine, to avoid such errors, it has a 'posttransfer' editing activity that hydrolyzes mischarged Thr-tRNA(Val) in a tRNA-dependent manner. The chain is Valine--tRNA ligase from Mycoplasmopsis pulmonis (strain UAB CTIP) (Mycoplasma pulmonis).